The chain runs to 401 residues: Secreted LysM effector Blys8 (401 aa).

The signal sequence occupies residues 1–19; the sequence is MRTLAIFFIGAAVAAHVSP. Positions 42–89 constitute a LysM 1 domain; that stretch reads TYYDEAYDKSYTCDDLLSAWVISKQDFESWNPAVGSDCKLVLGHSYCV. Residues 98–136 show a composition bias toward low complexity; the sequence is STTTTTTTSTTTKTTTKTTTTTTAAPKPTSSAPSGPSPT. Residues 98–137 form a disordered region; that stretch reads STTTTTTTSTTTKTTTKTTTTTTAAPKPTSSAPSGPSPTQ. In terms of domain architecture, LysM 2 spans 146-193; it reads AYYFVKAGDTCDKISQMYGTFSTAQFIEWNPAVGSSCTGLWAGYYYCV. The segment at 201–223 is disordered; sequence SRTSTAGPTSTKPANGVTTPQPT. Residues 233–279 enclose the LysM 3 domain; that stretch reads QFVYVQPGDQCGTVASRAGVSLSDFLQWNPSTGKDCSGLWANAYACV.

It belongs to the secreted LysM effector family.

Might have a role in sequestration of chitin oligosaccharides (breakdown products of fungal cell walls that are released during invasion and act as triggers of host immunity) to dampen host defense. The polypeptide is Secreted LysM effector Blys8 (Beauveria bassiana (strain ARSEF 2860) (White muscardine disease fungus)).